The primary structure comprises 437 residues: Aspartate aminotransferase, mitochondrial (437 aa).

3 residues coordinate L-aspartate: Gly72, Trp167, and Asn220. N6-(pyridoxal phosphate)lysine is present on Lys284. Residue Arg413 coordinates L-aspartate.

Belongs to the class-I pyridoxal-phosphate-dependent aminotransferase family. Homodimer. Requires pyridoxal 5'-phosphate as cofactor.

Its subcellular location is the mitochondrion matrix. The enzyme catalyses L-aspartate + 2-oxoglutarate = oxaloacetate + L-glutamate. Plays a key role in amino acid metabolism. Important for metabolite exchange between mitochondria and cytosol. The chain is Aspartate aminotransferase, mitochondrial from Schizosaccharomyces pombe (strain 972 / ATCC 24843) (Fission yeast).